The following is a 588-amino-acid chain: Adenine deaminase (588 aa).

The protein belongs to the metallo-dependent hydrolases superfamily. Adenine deaminase family. As to quaternary structure, homodimer. Mn(2+) serves as cofactor.

It catalyses the reaction adenine + H2O + H(+) = hypoxanthine + NH4(+). This is Adenine deaminase from Escherichia coli O45:K1 (strain S88 / ExPEC).